Consider the following 70-residue polypeptide: Consomatin Mrc3 (70 aa).

The N-terminal stretch at 1 to 22 (MQTAYWVMVMMMVWITAPLSEG) is a signal peptide. The propeptide occupies 23–55 (GKLNDVIRGLVPDDVTPKRILQSLISRRRFDGR). Cys-62 and Cys-67 form a disulfide bridge. Residue Trp-64 is modified to D-tryptophan. 4-hydroxyproline is present on Pro-68. Tyr-69 carries the post-translational modification Tyrosine amide.

This sequence belongs to the conotoxin C superfamily. Consomatin family. In terms of tissue distribution, expressed by the venom duct.

Its subcellular location is the secreted. Moderately activates human somatostatin receptors (SSTR) with a preferential activation of SSTR1 and SSTR4. In vivo, does not cause behavioral changes in mice within a few minutes of intracranial injection, but causes a progressive loss of movement thereafter. Four to five hours after injection, mice recover, even with the highest dose tested. Shows antinociception and antihyperalgesia activities in two mouse models of acute pain, most probably by acting outside the central nervous system. This chain is Consomatin Mrc3, found in Conus mercator (Trader cone).